A 290-amino-acid chain; its full sequence is Agroclavine dehydrogenase (290 aa).

The protein belongs to the fgaFS/easG family. In terms of assembly, monomer.

It carries out the reaction agroclavine + NADP(+) = didehydroagroclavine + NADPH + H(+). The protein operates within alkaloid biosynthesis; ergot alkaloid biosynthesis. In terms of biological role, agroclavine dehydrogenase; part of the gene cluster that mediates the biosynthesis of fungal ergot alkaloid. DmaW catalyzes the first step of ergot alkaloid biosynthesis by condensing dimethylallyl diphosphate (DMAP) and tryptophan to form 4-dimethylallyl-L-tryptophan. The second step is catalyzed by the methyltransferase easF that methylates 4-dimethylallyl-L-tryptophan in the presence of S-adenosyl-L-methionine, resulting in the formation of 4-dimethylallyl-L-abrine. The catalase easC and the FAD-dependent oxidoreductase easE then transform 4-dimethylallyl-L-abrine to chanoclavine-I which is further oxidized by easD in the presence of NAD(+), resulting in the formation of chanoclavine-I aldehyde. Agroclavine dehydrogenase easG then mediates the conversion of chanoclavine-I aldehyde to agroclavine via a non-enzymatic adduct reaction: the substrate is an iminium intermediate that is formed spontaneously from chanoclavine-I aldehyde in the presence of glutathione. The presence of easA is not required to complete this reaction. Further conversion of agroclavine to paspalic acid is a two-step process involving oxidation of agroclavine to elymoclavine and of elymoclavine to paspalic acid, the second step being performed by the elymoclavine oxidase cloA. Paspalic acid is then further converted to D-lysergic acid. Ergopeptines are assembled from D-lysergic acid and three different amino acids by the D-lysergyl-peptide-synthetases composed each of a monomudular and a trimodular nonribosomal peptide synthetase subunit. LpsB and lpsC encode the monomodular subunits responsible for D-lysergic acid activation and incorporation into the ergopeptine backbone. LpsA1 and A2 subunits encode the trimodular nonribosomal peptide synthetase assembling the tripeptide portion of ergopeptines. LpsA1 is responsible for formation of the major ergopeptine, ergotamine, and lpsA2 for alpha-ergocryptine, the minor ergopeptine of the total alkaloid mixture elaborated by C.purpurea. D-lysergyl-tripeptides are assembled by the nonribosomal peptide synthetases and released as N-(D-lysergyl-aminoacyl)-lactams. Cyclolization of the D-lysergyl-tripeptides is performed by the Fe(2+)/2-ketoglutarate-dependent dioxygenase easH which introduces a hydroxyl group into N-(D-lysergyl-aminoacyl)-lactam at alpha-C of the aminoacyl residue followed by spontaneous condensation with the terminal lactam carbonyl group. The chain is Agroclavine dehydrogenase from Claviceps purpurea (Ergot fungus).